Reading from the N-terminus, the 180-residue chain is 4-hydroxy-3-methylbut-2-enyl diphosphate reductase (180 aa).

Cysteine 12 provides a ligand contact to [4Fe-4S] cluster. (2E)-4-hydroxy-3-methylbut-2-enyl diphosphate contacts are provided by histidine 41 and histidine 74. Residues histidine 41 and histidine 74 each coordinate dimethylallyl diphosphate. The isopentenyl diphosphate site is built by histidine 41 and histidine 74. Cysteine 96 contacts [4Fe-4S] cluster. Histidine 124 is a (2E)-4-hydroxy-3-methylbut-2-enyl diphosphate binding site. Dimethylallyl diphosphate is bound at residue histidine 124. Histidine 124 lines the isopentenyl diphosphate pocket. The Proton donor role is filled by glutamate 126. Threonine 168 serves as a coordination point for (2E)-4-hydroxy-3-methylbut-2-enyl diphosphate.

This sequence belongs to the IspH family. It depends on [4Fe-4S] cluster as a cofactor.

The catalysed reaction is isopentenyl diphosphate + 2 oxidized [2Fe-2S]-[ferredoxin] + H2O = (2E)-4-hydroxy-3-methylbut-2-enyl diphosphate + 2 reduced [2Fe-2S]-[ferredoxin] + 2 H(+). The enzyme catalyses dimethylallyl diphosphate + 2 oxidized [2Fe-2S]-[ferredoxin] + H2O = (2E)-4-hydroxy-3-methylbut-2-enyl diphosphate + 2 reduced [2Fe-2S]-[ferredoxin] + 2 H(+). It participates in isoprenoid biosynthesis; dimethylallyl diphosphate biosynthesis; dimethylallyl diphosphate from (2E)-4-hydroxy-3-methylbutenyl diphosphate: step 1/1. It functions in the pathway isoprenoid biosynthesis; isopentenyl diphosphate biosynthesis via DXP pathway; isopentenyl diphosphate from 1-deoxy-D-xylulose 5-phosphate: step 6/6. In terms of biological role, catalyzes the conversion of 1-hydroxy-2-methyl-2-(E)-butenyl 4-diphosphate (HMBPP) into a mixture of isopentenyl diphosphate (IPP) and dimethylallyl diphosphate (DMAPP). Acts in the terminal step of the DOXP/MEP pathway for isoprenoid precursor biosynthesis. The chain is 4-hydroxy-3-methylbut-2-enyl diphosphate reductase from Pseudomonas fluorescens.